Reading from the N-terminus, the 452-residue chain is Probable phosphoglucosamine mutase (452 aa).

Ser96 (phosphoserine intermediate) is an active-site residue. Residues Ser96, Asp235, Asp237, and Asp239 each contribute to the Mg(2+) site. The residue at position 96 (Ser96) is a Phosphoserine.

Belongs to the phosphohexose mutase family. It depends on Mg(2+) as a cofactor. Post-translationally, activated by phosphorylation.

The catalysed reaction is alpha-D-glucosamine 1-phosphate = D-glucosamine 6-phosphate. In terms of biological role, catalyzes the conversion of glucosamine-6-phosphate to glucosamine-1-phosphate. This Methanopyrus kandleri (strain AV19 / DSM 6324 / JCM 9639 / NBRC 100938) protein is Probable phosphoglucosamine mutase.